We begin with the raw amino-acid sequence, 475 residues long: Sulfate adenylyltransferase subunit 1 (475 aa).

The region spanning 25-239 (KSLLRFLTCG…EVLETVEIQR (215 aa)) is the tr-type G domain. The G1 stretch occupies residues 34–41 (GSVDDGKS). Residue 34 to 41 (GSVDDGKS) coordinates GTP. Residues 92–96 (GITID) are G2. The segment at 113–116 (DTPG) is G3. Residues 113 to 117 (DTPGH) and 168 to 171 (NKMD) contribute to the GTP site. The segment at 168 to 171 (NKMD) is G4. The segment at 206–208 (SAL) is G5.

The protein belongs to the TRAFAC class translation factor GTPase superfamily. Classic translation factor GTPase family. CysN/NodQ subfamily. In terms of assembly, heterodimer composed of CysD, the smaller subunit, and CysN.

It carries out the reaction sulfate + ATP + H(+) = adenosine 5'-phosphosulfate + diphosphate. It participates in sulfur metabolism; hydrogen sulfide biosynthesis; sulfite from sulfate: step 1/3. Its function is as follows. With CysD forms the ATP sulfurylase (ATPS) that catalyzes the adenylation of sulfate producing adenosine 5'-phosphosulfate (APS) and diphosphate, the first enzymatic step in sulfur assimilation pathway. APS synthesis involves the formation of a high-energy phosphoric-sulfuric acid anhydride bond driven by GTP hydrolysis by CysN coupled to ATP hydrolysis by CysD. This chain is Sulfate adenylyltransferase subunit 1, found in Shigella flexneri serotype 5b (strain 8401).